Here is a 73-residue protein sequence, read N- to C-terminus: Hypotensin-like peptide (73 aa).

The first 25 residues, 1–25 (MKMMIAIVFVSILLLMFSLSSTAMG), serve as a signal peptide directing secretion.

As to expression, expressed by the venom gland.

It localises to the secreted. Its function is as follows. May potentiate the hypotensive effect of bradykinin. This chain is Hypotensin-like peptide, found in Tityus serrulatus (Brazilian scorpion).